The primary structure comprises 462 residues: ATP synthase subunit beta (462 aa).

149–156 (GGAGVGKT) lines the ATP pocket.

The protein belongs to the ATPase alpha/beta chains family. As to quaternary structure, F-type ATPases have 2 components, CF(1) - the catalytic core - and CF(0) - the membrane proton channel. CF(1) has five subunits: alpha(3), beta(3), gamma(1), delta(1), epsilon(1). CF(0) has three main subunits: a(1), b(2) and c(9-12). The alpha and beta chains form an alternating ring which encloses part of the gamma chain. CF(1) is attached to CF(0) by a central stalk formed by the gamma and epsilon chains, while a peripheral stalk is formed by the delta and b chains.

The protein localises to the cell inner membrane. It catalyses the reaction ATP + H2O + 4 H(+)(in) = ADP + phosphate + 5 H(+)(out). Its function is as follows. Produces ATP from ADP in the presence of a proton gradient across the membrane. The catalytic sites are hosted primarily by the beta subunits. The sequence is that of ATP synthase subunit beta from Fusobacterium nucleatum subsp. nucleatum (strain ATCC 25586 / DSM 15643 / BCRC 10681 / CIP 101130 / JCM 8532 / KCTC 2640 / LMG 13131 / VPI 4355).